The sequence spans 711 residues: Receptor-like protein 43 (711 aa).

The N-terminal stretch at 1 to 30 (MKGFWNSKSTIRITLSFIFLFISQFSDVLA) is a signal peptide. The Extracellular portion of the chain corresponds to 31–666 (APTRHLCRPE…EDEEVISWIA (636 aa)). Asn-78, Asn-114, Asn-143, Asn-167, and Asn-191 each carry an N-linked (GlcNAc...) asparagine glycan. LRR repeat units follow at residues 120 to 143 (LHFL…SIEN), 144 to 168 (LSHL…IGNL), 170 to 192 (HLTF…IGNL), 193 to 216 (SHLT…IGGL), 218 to 240 (HLTT…IGNL), 241 to 266 (SNLT…NLSQ), 268 to 288 (TRLD…LWTL), and 289 to 316 (PNLF…SMGH). N-linked (GlcNAc...) asparagine glycans are attached at residues Asn-239, Asn-242, Asn-252, and Asn-263. N-linked (GlcNAc...) asparagine glycans are attached at residues Asn-295, Asn-323, Asn-347, Asn-362, and Asn-372. One copy of the LRR 9; degenerate repeat lies at 317 to 334 (LLGSNNNFTGKIPSFICE). 10 LRR repeats span residues 335–358 (LRSL…CMGN), 360–384 (KSNL…IFEI), 386–406 (RSLD…LRFF), 407–430 (STLE…LTSL), 431–452 (PKLQ…EASF), 453–476 (LKLR…YFVK), 519–543 (LTIY…IGLL), 544–567 (KELL…MGKL), 568–591 (TALE…IGNL), and 593–616 (FLSC…QFLT). Asn-420 carries an N-linked (GlcNAc...) asparagine glycan. Asn-466 carries N-linked (GlcNAc...) asparagine glycosylation. N-linked (GlcNAc...) asparagine glycans are attached at residues Asn-550, Asn-590, and Asn-598. A helical transmembrane segment spans residues 667-687 (AAIGFIPGIVLGLTIGYILVF). At 688–711 (YKPEWFIKTFGRNNCRRRSTTTTH) the chain is on the cytoplasmic side.

Belongs to the RLP family.

The protein localises to the cell membrane. This is Receptor-like protein 43 from Arabidopsis thaliana (Mouse-ear cress).